A 101-amino-acid polypeptide reads, in one-letter code: MIPGEIMPKEGDITLNEGAEAITLMVANTGDRPVQVGSHYHFAEANAALEFDRDAARGMRLDITAGTAVRFEPGQRRDVQLIPISGARRIFGFNQQVMGDL.

It belongs to the urease beta subunit family. As to quaternary structure, heterotrimer of UreA (gamma), UreB (beta) and UreC (alpha) subunits. Three heterotrimers associate to form the active enzyme.

It is found in the cytoplasm. It catalyses the reaction urea + 2 H2O + H(+) = hydrogencarbonate + 2 NH4(+). The protein operates within nitrogen metabolism; urea degradation; CO(2) and NH(3) from urea (urease route): step 1/1. The chain is Urease subunit beta from Roseobacter denitrificans (strain ATCC 33942 / OCh 114) (Erythrobacter sp. (strain OCh 114)).